The chain runs to 217 residues: Pyridoxine/pyridoxamine 5'-phosphate oxidase (217 aa).

Substrate is bound by residues 13–16 (RREY) and K71. FMN-binding positions include 66 to 71 (RTVLLK), 81 to 82 (YT), R87, K88, and Q110. Y128, R132, and S136 together coordinate substrate. FMN contacts are provided by residues 145–146 (QS) and W190. 196 to 198 (RLH) lines the substrate pocket. R200 serves as a coordination point for FMN.

The protein belongs to the pyridoxamine 5'-phosphate oxidase family. As to quaternary structure, homodimer. It depends on FMN as a cofactor.

It catalyses the reaction pyridoxamine 5'-phosphate + O2 + H2O = pyridoxal 5'-phosphate + H2O2 + NH4(+). The enzyme catalyses pyridoxine 5'-phosphate + O2 = pyridoxal 5'-phosphate + H2O2. It participates in cofactor metabolism; pyridoxal 5'-phosphate salvage; pyridoxal 5'-phosphate from pyridoxamine 5'-phosphate: step 1/1. The protein operates within cofactor metabolism; pyridoxal 5'-phosphate salvage; pyridoxal 5'-phosphate from pyridoxine 5'-phosphate: step 1/1. Its function is as follows. Catalyzes the oxidation of either pyridoxine 5'-phosphate (PNP) or pyridoxamine 5'-phosphate (PMP) into pyridoxal 5'-phosphate (PLP). The polypeptide is Pyridoxine/pyridoxamine 5'-phosphate oxidase (Rubrobacter xylanophilus (strain DSM 9941 / JCM 11954 / NBRC 16129 / PRD-1)).